Reading from the N-terminus, the 385-residue chain is 1-deoxy-D-xylulose 5-phosphate reductoisomerase (385 aa).

NADPH contacts are provided by Thr-13, Gly-14, Ser-15, Ile-16, Asn-40, and Asn-122. 1-deoxy-D-xylulose 5-phosphate is bound at residue Lys-123. Glu-124 contributes to the NADPH binding site. Residue Asp-148 coordinates Mn(2+). Positions 149, 150, 177, and 200 each coordinate 1-deoxy-D-xylulose 5-phosphate. Glu-150 serves as a coordination point for Mn(2+). Gly-206 is a binding site for NADPH. Positions 213, 218, 219, and 222 each coordinate 1-deoxy-D-xylulose 5-phosphate. Position 222 (Glu-222) interacts with Mn(2+).

This sequence belongs to the DXR family. Mg(2+) serves as cofactor. It depends on Mn(2+) as a cofactor.

The enzyme catalyses 2-C-methyl-D-erythritol 4-phosphate + NADP(+) = 1-deoxy-D-xylulose 5-phosphate + NADPH + H(+). It participates in isoprenoid biosynthesis; isopentenyl diphosphate biosynthesis via DXP pathway; isopentenyl diphosphate from 1-deoxy-D-xylulose 5-phosphate: step 1/6. In terms of biological role, catalyzes the NADPH-dependent rearrangement and reduction of 1-deoxy-D-xylulose-5-phosphate (DXP) to 2-C-methyl-D-erythritol 4-phosphate (MEP). This Francisella tularensis subsp. holarctica (strain FTNF002-00 / FTA) protein is 1-deoxy-D-xylulose 5-phosphate reductoisomerase.